We begin with the raw amino-acid sequence, 338 residues long: Ketol-acid reductoisomerase (NADP(+)) (338 aa).

Positions 1–181 (MKIYYDKDCN…GGGRAGIIET (181 aa)) constitute a KARI N-terminal Rossmann domain. NADP(+) contacts are provided by residues 24–27 (YGSQ), Arg47, Ser50, Ser52, and 82–85 (DETQ). His107 is an active-site residue. Residue Gly133 participates in NADP(+) binding. The KARI C-terminal knotted domain maps to 182–327 (SFKEETETDL…ARLRSMMSWI (146 aa)). Residues Asp190, Glu194, Glu226, and Glu230 each contribute to the Mg(2+) site. Ser251 contacts substrate.

The protein belongs to the ketol-acid reductoisomerase family. The cofactor is Mg(2+).

The enzyme catalyses (2R)-2,3-dihydroxy-3-methylbutanoate + NADP(+) = (2S)-2-acetolactate + NADPH + H(+). It catalyses the reaction (2R,3R)-2,3-dihydroxy-3-methylpentanoate + NADP(+) = (S)-2-ethyl-2-hydroxy-3-oxobutanoate + NADPH + H(+). It functions in the pathway amino-acid biosynthesis; L-isoleucine biosynthesis; L-isoleucine from 2-oxobutanoate: step 2/4. Its pathway is amino-acid biosynthesis; L-valine biosynthesis; L-valine from pyruvate: step 2/4. Its function is as follows. Involved in the biosynthesis of branched-chain amino acids (BCAA). Catalyzes an alkyl-migration followed by a ketol-acid reduction of (S)-2-acetolactate (S2AL) to yield (R)-2,3-dihydroxy-isovalerate. In the isomerase reaction, S2AL is rearranged via a Mg-dependent methyl migration to produce 3-hydroxy-3-methyl-2-ketobutyrate (HMKB). In the reductase reaction, this 2-ketoacid undergoes a metal-dependent reduction by NADPH to yield (R)-2,3-dihydroxy-isovalerate. This Geobacter metallireducens (strain ATCC 53774 / DSM 7210 / GS-15) protein is Ketol-acid reductoisomerase (NADP(+)).